An 89-amino-acid chain; its full sequence is MAKKSVIARNEKRIKLVAKYAELRAELVKAGDYEALRKLPRDSSATRVRNRCVLTGRGRGVYAKFGLCRHMFRKLSLEGKLPGIRKASW.

It belongs to the universal ribosomal protein uS14 family. As to quaternary structure, part of the 30S ribosomal subunit. Contacts proteins S3 and S10.

Its function is as follows. Binds 16S rRNA, required for the assembly of 30S particles and may also be responsible for determining the conformation of the 16S rRNA at the A site. The sequence is that of Small ribosomal subunit protein uS14 from Chlorobium chlorochromatii (strain CaD3).